We begin with the raw amino-acid sequence, 164 residues long: UPF0178 protein BRADO3147 (164 aa).

It belongs to the UPF0178 family.

The protein is UPF0178 protein BRADO3147 of Bradyrhizobium sp. (strain ORS 278).